We begin with the raw amino-acid sequence, 208 residues long: 3-demethoxyubiquinol 3-hydroxylase (208 aa).

Fe cation-binding residues include Glu57, Glu87, His90, Glu139, Glu171, and His174.

Belongs to the COQ7 family. It depends on Fe cation as a cofactor.

It is found in the cell membrane. It carries out the reaction a 5-methoxy-2-methyl-3-(all-trans-polyprenyl)benzene-1,4-diol + AH2 + O2 = a 3-demethylubiquinol + A + H2O. Its pathway is cofactor biosynthesis; ubiquinone biosynthesis. Functionally, catalyzes the hydroxylation of 2-nonaprenyl-3-methyl-6-methoxy-1,4-benzoquinol during ubiquinone biosynthesis. The chain is 3-demethoxyubiquinol 3-hydroxylase from Burkholderia lata (strain ATCC 17760 / DSM 23089 / LMG 22485 / NCIMB 9086 / R18194 / 383).